Consider the following 178-residue polypeptide: Membrane-spanning protein YciB (178 aa).

5 consecutive transmembrane segments (helical) span residues 22 to 42 (IFIA…ITSI), 52 to 72 (LINL…HNSS), 76 to 96 (WKVT…YLFI), 121 to 141 (LFWS…ILYF), and 151 to 171 (IFGL…YIYF).

The protein belongs to the YciB family.

The protein resides in the cell membrane. In terms of biological role, plays a role in cell envelope biogenesis, maintenance of cell envelope integrity and membrane homeostasis. This chain is Membrane-spanning protein YciB, found in Buchnera aphidicola subsp. Baizongia pistaciae (strain Bp).